The chain runs to 268 residues: E3 ubiquitin-protein ligase IAP-3 (268 aa).

2 BIR repeats span residues 18–84 (KAAR…CPFV) and 111–178 (EAAR…CEYV). C148, C151, H168, and C175 together coordinate Zn(2+). The segment at 221 to 256 (CKICLGAEKTVCFVPCGHVVACGKCAAGVTTCPVCR) adopts an RING-type zinc-finger fold.

It belongs to the IAP family. Auto-ubiquitinated.

It catalyses the reaction S-ubiquitinyl-[E2 ubiquitin-conjugating enzyme]-L-cysteine + [acceptor protein]-L-lysine = [E2 ubiquitin-conjugating enzyme]-L-cysteine + N(6)-ubiquitinyl-[acceptor protein]-L-lysine.. RING-finger E3 ubiquitin ligase required to prevent cellular apoptosis in infected cells. Ubiquitinates and subsequently targets host pro-apoptotic cellular proteins such as HID for degradation by the proteasome. In Orgyia pseudotsugata multicapsid polyhedrosis virus (OpMNPV), this protein is E3 ubiquitin-protein ligase IAP-3 (IAP3).